Here is a 708-residue protein sequence, read N- to C-terminus: Meiotic sister-chromatid recombination protein 6, mitochondrial (708 aa).

A mitochondrion-targeting transit peptide spans 1-15 (MLSVRISARQCSVRG). Positions 19-36 (QANNVSQPAKDNATNGSD) are enriched in polar residues. A disordered region spans residues 19-44 (QANNVSQPAKDNATNGSDAATEKKGT).

The protein localises to the mitochondrion. In terms of biological role, may be involved in the control of meiotic sister-chromatid recombination. The polypeptide is Meiotic sister-chromatid recombination protein 6, mitochondrial (MSC6) (Kluyveromyces lactis (strain ATCC 8585 / CBS 2359 / DSM 70799 / NBRC 1267 / NRRL Y-1140 / WM37) (Yeast)).